The sequence spans 356 residues: Malate dehydrogenase, glyoxysomal (356 aa).

A glyoxysome-targeting transit peptide spans 1–36 (MEDAAAAARRMERLASHLRPPASQMEESPLLRGSNC). NAD(+) is bound by residues 51–57 (GASGGIG) and D77. Residues R124 and R130 each coordinate substrate. Residues N137 and 160-162 (ISN) contribute to the NAD(+) site. Positions 162 and 196 each coordinate substrate. H220 serves as the catalytic Proton acceptor. Residue M271 coordinates NAD(+).

Belongs to the LDH/MDH superfamily. MDH type 1 family. Homodimer.

The protein resides in the glyoxysome. The enzyme catalyses (S)-malate + NAD(+) = oxaloacetate + NADH + H(+). This is Malate dehydrogenase, glyoxysomal from Oryza sativa subsp. japonica (Rice).